Reading from the N-terminus, the 203-residue chain is Small ribosomal subunit protein uS4 (203 aa).

The S4 RNA-binding domain occupies 93–156; sequence TRLDNLVFRL…QNLAIVNEAI (64 aa).

Belongs to the universal ribosomal protein uS4 family. In terms of assembly, part of the 30S ribosomal subunit. Contacts protein S5. The interaction surface between S4 and S5 is involved in control of translational fidelity.

Its function is as follows. One of the primary rRNA binding proteins, it binds directly to 16S rRNA where it nucleates assembly of the body of the 30S subunit. Functionally, with S5 and S12 plays an important role in translational accuracy. The sequence is that of Small ribosomal subunit protein uS4 from Lacticaseibacillus casei (strain BL23) (Lactobacillus casei).